We begin with the raw amino-acid sequence, 282 residues long: Exo-glucosaminidase LytG (282 aa).

The signal sequence occupies residues 1-29; sequence MARKKLKKRKLLISLFFLVSIPLALFVLA. Positions 203–281 constitute a GW domain; it reads SLKSVDLNAS…DDSAVEIKEA (79 aa).

It belongs to the glycosyl hydrolase 73 family. Mg(2+) serves as cofactor.

The protein localises to the secreted. Its subcellular location is the cell wall. Its activity is regulated as follows. Inhibited by EDTA. Is the major glucosaminidase responsible for peptidoglycan structural determination during vegetative growth. Catalyzes the hydrolysis of 1,4-beta-linkages between N-acetyl-D-glucosamine and N-acetylmuramic acid residues in peptidoglycan. Acts processively from the ends of the glycan strands. Also plays a role in motility, chemotaxis and cell division. This chain is Exo-glucosaminidase LytG (lytG), found in Bacillus subtilis (strain 168).